The primary structure comprises 652 residues: Epithelial sodium channel subunit gamma (652 aa).

Over 1 to 54 (MAPGEKIKAKIKKNLPVTGPQAPNIKELMQWYCLNTNTHGCRRIVVSRGRLRRL) the chain is Cytoplasmic. A helical membrane pass occupies residues 55 to 75 (LWILFTLTAVALIFWQCALLI). At 76–537 (SSFYTVSVSI…EQLLSNIGGQ (462 aa)) the chain is on the extracellular side. Intrachain disulfides connect C100–C286, C210–C217, C263–C270, C375–C460, C397–C456, C401–C452, C410–C437, and C412–C426. The segment at 137 to 224 (RKRREAQSWS…SDCAVYTFSS (88 aa)) is gating release of inhibition by proteolysis (GRIP); protease-sensitive region that is responsible for the proteolytic activation of the channel. An N-linked (GlcNAc...) asparagine glycan is attached at N212. An N-linked (GlcNAc...) asparagine glycan is attached at N500. A helical membrane pass occupies residues 538 to 558 (LGLWMSCSVVCVIEIIEVFFI). Residues 559 to 652 (DSLSIIARHQ…LTDTQTTFPH (94 aa)) lie on the Cytoplasmic side of the membrane. Residues 610 to 631 (SALSLPPAPGSQVPGTPPPRYN) form a disordered region. The PY motif; recruits WW domain-containing proteins and is thereby required for ubiquitination and inhibition of the channel by NEDD4 and NEDD4L signature appears at 626-630 (PPPRY).

It belongs to the amiloride-sensitive sodium channel (TC 1.A.6) family. SCNN1G subfamily. Component of the heterotrimeric epithelial sodium channel (ENaC) composed of an alpha/SCNN1A, a beta/SCNN1B and a gamma/SCNN1G subunit. An additional delta/SCNN1D subunit can replace the alpha/SCNN1A subunit to form an alternative channel with specific properties. Interacts with WWP1 (via WW domains). Interacts with WWP2 (via WW domains); inhibits the channel. Interacts with the full-length immature form of PCSK9 (pro-PCSK9); inhibits ENaC by promoting its proteasomal degradation. Interacts with BPIFA1; the interaction is indirect via SCNN1B and inhibits the proteolytic maturation of SCNN1A and SCNN1G and the activation of ENaC. In terms of processing, phosphorylated on serine and threonine residues. Aldosterone and insulin increase the basal level of phosphorylation. Ubiquitinated. Can be ubiquitinated at multiple sites and undergo monoubiquitination and polyubiquitination. Ubiquitination by NEDD4 or NEDD4L inhibits the ENaC channel through endocytosis, intracellular retention and degradation of its individual subunits. Post-translationally, ENaC is activated through the proteolytic maturation of its subunits. Furin cleaves the SCNN1G subunit first, followed by cleavage by prostasin (PRSS8), which results in a stepwise increase in the open probability of the channel due to the release of an inhibitory tract. BPIFA1, which is recruited by the SCNN1B subunit, prevents the proteolytic activation of ENaC. In terms of processing, N-glycosylated. N-linked glycans are processed to complex type during ENaC complex assembly and transport to the plasma membrane.

The protein localises to the apical cell membrane. It catalyses the reaction Na(+)(in) = Na(+)(out). Originally identified and characterized by its inhibition by the diuretic drug amiloride. This is one of the three pore-forming subunits of the heterotrimeric epithelial sodium channel (ENaC), a critical regulator of sodium balance and fluid homeostasis. ENaC operates in epithelial tissues, where it mediates the electrodiffusion of sodium ions from extracellular fluid through the apical membrane of cells, with water following osmotically. It plays a key role in maintaining sodium homeostasis through electrogenic sodium reabsorption in the kidneys. Additionally, ENaC is essential for airway surface liquid homeostasis, which is crucial for proper mucus clearance. The protein is Epithelial sodium channel subunit gamma of Bos taurus (Bovine).